Here is a 1362-residue protein sequence, read N- to C-terminus: DNA-directed RNA polymerase subunit beta (1362 aa).

Belongs to the RNA polymerase beta chain family. In terms of assembly, the RNAP catalytic core consists of 2 alpha, 1 beta, 1 beta' and 1 omega subunit. When a sigma factor is associated with the core the holoenzyme is formed, which can initiate transcription.

It carries out the reaction RNA(n) + a ribonucleoside 5'-triphosphate = RNA(n+1) + diphosphate. DNA-dependent RNA polymerase catalyzes the transcription of DNA into RNA using the four ribonucleoside triphosphates as substrates. In Acidithiobacillus ferrooxidans (strain ATCC 23270 / DSM 14882 / CIP 104768 / NCIMB 8455) (Ferrobacillus ferrooxidans (strain ATCC 23270)), this protein is DNA-directed RNA polymerase subunit beta.